The primary structure comprises 308 residues: Homeobox-leucine zipper protein HOX2 (308 aa).

Disordered regions lie at residues 15–36 (QGSL…SSPW) and 71–117 (QGRA…RKKL). Over residues 74 to 88 (ASTSPDSAAALSSAS) the composition is skewed to low complexity. A DNA-binding region (homeobox) is located at residues 112-171 (GGRKKLRLSKDQAAVLEECFKTHSTLNPKQKVALANRLGLRPRQVEVWFQNRRARTKLKQ). Positions 170 to 214 (KQTEVDCEYLKRWCERLADENKRLEKELADLRALKAAPSPASASA) are leucine-zipper.

It belongs to the HD-ZIP homeobox family. Class II subfamily. In terms of assembly, homodimer. May form a heterodimer with HOX1, HOX3 or HOX7. Expressed in seedlings, roots, leaves, nodes, internodes, flowers and embryo.

It localises to the nucleus. Probable transcription factor that binds to the DNA sequence 5'-CAAT[GC]ATTG-3'. This is Homeobox-leucine zipper protein HOX2 (HOX2) from Oryza sativa subsp. indica (Rice).